The sequence spans 88 residues: Apolipoprotein C-I (88 aa).

The N-terminal stretch at 1–26 (MRLFLSLPVWVAVLAMVLEGPAPAQA) is a signal peptide.

Belongs to the apolipoprotein C1 family.

It is found in the secreted. Inhibitor of lipoprotein binding to the low density lipoprotein (LDL) receptor, LDL receptor-related protein, and very low density lipoprotein (VLDL) receptor. Associates with high density lipoproteins (HDL) and the triacylglycerol-rich lipoproteins in the plasma and makes up about 10% of the protein of the VLDL and 2% of that of HDL. Appears to interfere directly with fatty acid uptake and is also the major plasma inhibitor of cholesteryl ester transfer protein (CETP). Binds free fatty acids and reduces their intracellular esterification. Modulates the interaction of APOE with beta-migrating VLDL and inhibits binding of beta-VLDL to the LDL receptor-related protein. The sequence is that of Apolipoprotein C-I (APOC1) from Ursus maritimus (Polar bear).